The sequence spans 429 residues: MKKQNNLRSLAAQAVEQVVEQGQSLSNVLPPLQQKVADKDKALLQELCFGVLRTLSQLEWLINKLMSRPMTGKQRTVHYLIMVGFYQLLYTRVPPHAALAETVEGAVSIKRPQLKGLINGVLRQFQRQQETLLNEFATSDARFLHPGWLVKRLQNAYPTQWQRIIEANNQRPPMWLRVNRTHHTRDGWLGLLEDAGMKGYPHPDYPDAVRLETPAPVHALPGFAEGWVTVQDASAQGCAVFLAPQNGEHILDLCAAPGGKTTHILEVAPEADVLAVDIDEQRLSRVYDNLKRLGMKATVKQGDGRYPAQWCGEQQFDRILLDAPCSATGVIRRHPDIKWLRRDRDIAELAQLQAEILDAVWPRLNPGGTLVYATCSVLPEENRDQIKAFLQRTPDAALSETGTPDQPGQQNLPGGEEGDGFFYAKLIKK.

Residues 254-260, Asp277, Asp303, and Asp322 contribute to the S-adenosyl-L-methionine site; that span reads CAAPGGK. Catalysis depends on Cys375, which acts as the Nucleophile. Residues 397-419 are disordered; sequence ALSETGTPDQPGQQNLPGGEEGD. Positions 400–412 are enriched in polar residues; the sequence is ETGTPDQPGQQNL.

Belongs to the class I-like SAM-binding methyltransferase superfamily. RsmB/NOP family.

The protein resides in the cytoplasm. It catalyses the reaction cytidine(967) in 16S rRNA + S-adenosyl-L-methionine = 5-methylcytidine(967) in 16S rRNA + S-adenosyl-L-homocysteine + H(+). Its function is as follows. Specifically methylates the cytosine at position 967 (m5C967) of 16S rRNA. The polypeptide is Ribosomal RNA small subunit methyltransferase B (Salmonella agona (strain SL483)).